The primary structure comprises 66 residues: Beta-mammal toxin Co1 (66 aa).

The LCN-type CS-alpha/beta domain maps to 1–66 (KEGYLVNHST…VWPLPKKTCN (66 aa)). 4 cysteine pairs are disulfide-bonded: Cys12/Cys65, Cys16/Cys41, Cys25/Cys46, and Cys29/Cys48.

As to expression, expressed by the venom gland.

Its subcellular location is the secreted. Beta toxins bind voltage-independently at site-4 of sodium channels (Nav) and shift the voltage of activation toward more negative potentials thereby affecting sodium channel activation and promoting spontaneous and repetitive firing. This toxin acts on human Nav1.6/SCN8A voltage-gated sodium channels. In vivo, is lethal to mice 40 minutes after intraperitoneal injection at a dose of 5ug. No activity is observed when injected into crickets or woodlice. The protein is Beta-mammal toxin Co1 of Centruroides ornatus (Scorpion).